Here is a 335-residue protein sequence, read N- to C-terminus: Tyrosine-protein phosphatase 1 (335 aa).

The region spanning 15 to 328 (LLGKFKFIQN…LFIYHAAKYL (314 aa)) is the Tyrosine-protein phosphatase domain. Residue S83 is modified to Phosphoserine; by CLK1. Catalysis depends on C252, which acts as the Phosphocysteine intermediate.

This sequence belongs to the protein-tyrosine phosphatase family. Non-receptor class subfamily. Post-translationally, activated by phosphorylation at Ser-83.

The protein localises to the cytoplasm. It carries out the reaction O-phospho-L-tyrosyl-[protein] + H2O = L-tyrosyl-[protein] + phosphate. Functionally, is not required for vegetative growth. The chain is Tyrosine-protein phosphatase 1 (PTP1) from Saccharomyces cerevisiae (strain ATCC 204508 / S288c) (Baker's yeast).